Reading from the N-terminus, the 201-residue chain is Small ribosomal subunit protein uS4 (201 aa).

Residues 91–155 enclose the S4 RNA-binding domain; it reads SRLDNVVYRA…STLPFQVARE (65 aa).

Belongs to the universal ribosomal protein uS4 family. Part of the 30S ribosomal subunit. Contacts protein S5. The interaction surface between S4 and S5 is involved in control of translational fidelity.

In terms of biological role, one of the primary rRNA binding proteins, it binds directly to 16S rRNA where it nucleates assembly of the body of the 30S subunit. With S5 and S12 plays an important role in translational accuracy. The protein is Small ribosomal subunit protein uS4 of Rhodococcus jostii (strain RHA1).